The primary structure comprises 363 residues: tRNA N6-adenosine threonylcarbamoyltransferase (363 aa).

Residues H121 and H125 each coordinate Fe cation. Substrate-binding positions include 143–147 (LASGG), D176, G189, and N287. D315 contributes to the Fe cation binding site.

Belongs to the KAE1 / TsaD family. It depends on Fe(2+) as a cofactor.

The protein resides in the cytoplasm. The enzyme catalyses L-threonylcarbamoyladenylate + adenosine(37) in tRNA = N(6)-L-threonylcarbamoyladenosine(37) in tRNA + AMP + H(+). Its function is as follows. Required for the formation of a threonylcarbamoyl group on adenosine at position 37 (t(6)A37) in tRNAs that read codons beginning with adenine. Is involved in the transfer of the threonylcarbamoyl moiety of threonylcarbamoyl-AMP (TC-AMP) to the N6 group of A37, together with TsaE and TsaB. TsaD likely plays a direct catalytic role in this reaction. The sequence is that of tRNA N6-adenosine threonylcarbamoyltransferase from Rhodopseudomonas palustris (strain TIE-1).